A 156-amino-acid chain; its full sequence is Ribonuclease pancreatic (156 aa).

An N-terminal signal peptide occupies residues 1–28 (MALEKSLVLLPLLVLILLVLGWVQPSLG). The span at 33–43 (AKKFQRQHMDS) shows a compositional bias: basic and acidic residues. Residues 33-52 (AKKFQRQHMDSDSSPSSNST) are disordered. Residues K35 and R38 each contribute to the substrate site. Residue H40 is the Proton acceptor of the active site. 2 N-linked (GlcNAc...) asparagine glycosylation sites follow: N50 and N62. Intrachain disulfides connect C54–C112, C68–C123, C86–C138, and C93–C100. Substrate-binding positions include 69 to 73 (KPVNT) and K94. N104 carries an N-linked (GlcNAc...) asparagine glycan. R113 serves as a coordination point for substrate. Residue N116 is glycosylated (N-linked (GlcNAc...) asparagine). The Proton donor role is filled by H147.

Belongs to the pancreatic ribonuclease family. Monomer. Interacts with and forms tight 1:1 complexes with RNH1. Dimerization of two such complexes may occur. Interaction with RNH1 inhibits this protein.

Its subcellular location is the secreted. The enzyme catalyses an [RNA] containing cytidine + H2O = an [RNA]-3'-cytidine-3'-phosphate + a 5'-hydroxy-ribonucleotide-3'-[RNA].. It carries out the reaction an [RNA] containing uridine + H2O = an [RNA]-3'-uridine-3'-phosphate + a 5'-hydroxy-ribonucleotide-3'-[RNA].. Endonuclease that catalyzes the cleavage of RNA on the 3' side of pyrimidine nucleotides. Acts on single-stranded and double-stranded RNA. The protein is Ribonuclease pancreatic (RNASE1) of Gorilla gorilla gorilla (Western lowland gorilla).